Reading from the N-terminus, the 400-residue chain is Sensory histidine kinase/phosphatase NtrB (400 aa).

2 stretches are compositionally biased toward low complexity: residues 1–10 (MARASAAAPL) and 18–27 (RAPSSSYRPV). A disordered region spans residues 1–27 (MARASAAAPLPRRPARPRAPSSSYRPV). Residues 29–99 (PCIDPSVMLN…IEQVQQGRHR (71 aa)) form the PAS domain. The Histidine kinase domain maps to 163 to 381 (MLGHEVKNPL…VFKVSLPMFD (219 aa)). The residue at position 166 (His166) is a Phosphohistidine; by autocatalysis.

Autophosphorylated.

It is found in the cytoplasm. It catalyses the reaction ATP + protein L-histidine = ADP + protein N-phospho-L-histidine.. Its function is as follows. Member of the two-component regulatory system NtrB/NtrC, which controls expression of the nitrogen-regulated (ntr) genes in response to nitrogen limitation. Under conditions of nitrogen limitation, NtrB autophosphorylates and transfers the phosphoryl group to NtrC. In the presence of nitrogen, acts as a phosphatase that dephosphorylates and inactivates NtrC. The chain is Sensory histidine kinase/phosphatase NtrB from Azospirillum brasilense.